A 199-amino-acid polypeptide reads, in one-letter code: NAD(P)H dehydrogenase (quinone) (199 aa).

Residues 4–190 (MLVLYYSAYG…DGARFQGRRV (187 aa)) form the Flavodoxin-like domain. FMN is bound by residues 10–15 (SAYGHM) and 78–80 (TRY). Tyr-12 provides a ligand contact to NAD(+). Position 98 (Trp-98) interacts with substrate. Residues 113–119 (STATQYG) and His-134 each bind FMN. A disordered region spans residues 162–181 (GMTTTADGDGSRQPSAQELD). The span at 163 to 177 (MTTTADGDGSRQPSA) shows a compositional bias: polar residues.

The protein belongs to the WrbA family. It depends on FMN as a cofactor.

It carries out the reaction a quinone + NADH + H(+) = a quinol + NAD(+). The catalysed reaction is a quinone + NADPH + H(+) = a quinol + NADP(+). The sequence is that of NAD(P)H dehydrogenase (quinone) from Brucella suis (strain ATCC 23445 / NCTC 10510).